A 264-amino-acid chain; its full sequence is Glycosylphosphatidylinositol anchor biosynthesis protein 11 (264 aa).

A disordered region spans residues 1-45 (MPLVDPVTMSTPSTPAKAMGKSLPNTVKDPSPPPKAGSHTRSPVE). 6 helical membrane passes run 49-69 (NSYY…VLLW), 83-103 (LILP…LPVA), 132-152 (LLSL…MVLF), 160-180 (APHT…PLFY), 202-222 (SVGG…PIPL), and 233-253 (VTVL…GRTL).

It belongs to the PIGF family.

The protein resides in the endoplasmic reticulum membrane. Its pathway is glycolipid biosynthesis; glycosylphosphatidylinositol-anchor biosynthesis. In terms of biological role, acts in the GPI biosynthetic pathway between GlcNAc-PI synthesis and GPI transfer to protein. This chain is Glycosylphosphatidylinositol anchor biosynthesis protein 11 (GPI11), found in Pyricularia oryzae (strain 70-15 / ATCC MYA-4617 / FGSC 8958) (Rice blast fungus).